A 47-amino-acid polypeptide reads, in one-letter code: Large ribosomal subunit protein eL40 (47 aa).

The protein belongs to the eukaryotic ribosomal protein eL40 family.

In Halobacterium salinarum (strain ATCC 29341 / DSM 671 / R1), this protein is Large ribosomal subunit protein eL40.